We begin with the raw amino-acid sequence, 351 residues long: Ion-translocating oxidoreductase complex subunit D (351 aa).

Transmembrane regions (helical) follow at residues 37–57 (YFFG…AILA), 88–108 (AIPP…AIVI), and 123–143 (PAMA…TTWL). T187 bears the FMN phosphoryl threonine mark. The next 4 helical transmembrane spans lie at 214–234 (FAGL…LFLL), 241–261 (WHIP…FAVF), 270–290 (IFNL…TDPV), and 300–317 (LYYG…RSWG).

Belongs to the NqrB/RnfD family. In terms of assembly, the complex is composed of six subunits: RnfA, RnfB, RnfC, RnfD, RnfE and RnfG. It depends on FMN as a cofactor.

The protein localises to the cell inner membrane. Part of a membrane-bound complex that couples electron transfer with translocation of ions across the membrane. In Aliivibrio salmonicida (strain LFI1238) (Vibrio salmonicida (strain LFI1238)), this protein is Ion-translocating oxidoreductase complex subunit D.